A 448-amino-acid polypeptide reads, in one-letter code: UPF0053 protein sll0260 (448 aa).

The CNNM transmembrane domain maps to 2 to 203; it reads FSSSVELELF…AQAGMIDEAE (202 aa). 4 helical membrane-spanning segments follow: residues 11-31, 62-82, 106-126, and 142-162; these read FFIF…IAIV, FLSA…AVGG, LSIS…GELV, and VAPA…LLGV. CBS domains follow at residues 222 to 281 and 286 to 345; these read MTPR…GQKI and IVQP…NDDE.

It belongs to the UPF0053 family.

It is found in the cell membrane. The polypeptide is UPF0053 protein sll0260 (Synechocystis sp. (strain ATCC 27184 / PCC 6803 / Kazusa)).